We begin with the raw amino-acid sequence, 692 residues long: Elongation factor G (692 aa).

The region spanning 8–283 is the tr-type G domain; that stretch reads KNTRNIGIMA…AVVDYLPSPV (276 aa). GTP contacts are provided by residues 17-24, 81-85, and 135-138; these read AHIDAGKT, DTPGH, and NKMD.

This sequence belongs to the TRAFAC class translation factor GTPase superfamily. Classic translation factor GTPase family. EF-G/EF-2 subfamily.

The protein localises to the cytoplasm. Functionally, catalyzes the GTP-dependent ribosomal translocation step during translation elongation. During this step, the ribosome changes from the pre-translocational (PRE) to the post-translocational (POST) state as the newly formed A-site-bound peptidyl-tRNA and P-site-bound deacylated tRNA move to the P and E sites, respectively. Catalyzes the coordinated movement of the two tRNA molecules, the mRNA and conformational changes in the ribosome. This Exiguobacterium sp. (strain ATCC BAA-1283 / AT1b) protein is Elongation factor G.